The primary structure comprises 174 residues: RxLR effector protein 207 (174 aa).

Positions 1–20 (MSKVFLLLVLSVFALVSCDA) are cleaved as a signal peptide. Positions 46–62 (RMLRAQEEPTNAADEER) match the RxLR-dEER motif. Residues 82-99 (VTNSKLVQSMNNKLASLT) are disordered.

This sequence belongs to the RxLR effector family. Interacts with Nicotiana benthamiana ACD11, BPA1 (binding partner of ACD11), as well as BPA-like proteins BPL1, BPL2, BPL3 and BPL4.

The protein resides in the secreted. It is found in the host cell membrane. In terms of biological role, secreted effector that activates ROS-mediated cell death in plant host and is essential for virulence. Plays a role in the transition from the biotrophic to necrotrophic stage. Associates with and promotes the degradation of Nicotiana benthamiana BPA1, BPL1, BPL2, and BPL4 to disrupt ACD11 stabilization in a 26S proteasome-dependent manner. The sequence is that of RxLR effector protein 207 from Phytophthora capsici.